The primary structure comprises 143 residues: Transcriptional regulator MraZ (143 aa).

SpoVT-AbrB domains follow at residues 5-47 and 76-119; these read EYQH…PQDE and AAEL…STEK.

The protein belongs to the MraZ family. In terms of assembly, forms oligomers.

It localises to the cytoplasm. Its subcellular location is the nucleoid. In Syntrophomonas wolfei subsp. wolfei (strain DSM 2245B / Goettingen), this protein is Transcriptional regulator MraZ.